The following is a 134-amino-acid chain: L-ectoine synthase (134 aa).

This sequence belongs to the ectoine synthase family.

It carries out the reaction (2S)-4-acetamido-2-aminobutanoate = L-ectoine + H2O. Its pathway is amine and polyamine biosynthesis; ectoine biosynthesis; L-ectoine from L-aspartate 4-semialdehyde: step 3/3. Its function is as follows. Catalyzes the circularization of gamma-N-acetyl-alpha,gamma-diaminobutyric acid (ADABA) to ectoine (1,4,5,6-tetrahydro-2-methyl-4-pyrimidine carboxylic acid), which is an excellent osmoprotectant. The chain is L-ectoine synthase (ectC) from Sporosarcina pasteurii (Bacillus pasteurii).